A 412-amino-acid chain; its full sequence is DnaJ homolog subfamily A member 2 (412 aa).

Residues 8 to 70 (KLYDILGVPP…EKRELYDRYG (63 aa)) form the J domain. Lys39 carries the post-translational modification N6-acetyllysine. Ser78 and Ser123 each carry phosphoserine. The CR-type zinc finger occupies 130–214 (GKTTKLQLSK…CEGKKVIKEV (85 aa)). Residue Lys134 forms a Glycyl lysine isopeptide (Lys-Gly) (interchain with G-Cter in SUMO2) linkage. The Zn(2+) site is built by Cys143 and Cys146. The stretch at 143-150 (CSACSGQG) is one CXXCXGXG motif repeat. At Lys152 the chain carries N6-acetyllysine. Positions 159, 162, 186, 189, 202, and 205 each coordinate Zn(2+). 3 CXXCXGXG motif repeats span residues 159-166 (CSACRGRG), 186-193 (CSDCNGEG), and 202-209 (CKKCEGKK). The tract at residues 365–412 (IGETEEVELQEFDSTRGSGGGQRREAYNDSSDEESSSHHGPGVQCAHQ) is disordered. Tyr391 is subject to Phosphotyrosine. Ser394 and Ser395 each carry phosphoserine. Cys409 is modified (cysteine methyl ester). The S-farnesyl cysteine moiety is linked to residue Cys409. Positions 410–412 (AHQ) are cleaved as a propeptide — removed in mature form.

It is found in the membrane. Its function is as follows. Co-chaperone of Hsc70. Stimulates ATP hydrolysis and the folding of unfolded proteins mediated by HSPA1A/B (in vitro). The polypeptide is DnaJ homolog subfamily A member 2 (DNAJA2) (Homo sapiens (Human)).